Reading from the N-terminus, the 192-residue chain is Thymidine kinase (192 aa).

ATP-binding positions include 9–16 (GAMNSGKT) and 85–88 (DEAQ). The active-site Proton acceptor is Glu86. Zn(2+) contacts are provided by Cys143, Cys146, Cys180, and His183.

This sequence belongs to the thymidine kinase family. In terms of assembly, homotetramer.

The protein resides in the cytoplasm. The catalysed reaction is thymidine + ATP = dTMP + ADP + H(+). The protein is Thymidine kinase of Lactiplantibacillus plantarum (strain ATCC BAA-793 / NCIMB 8826 / WCFS1) (Lactobacillus plantarum).